A 307-amino-acid chain; its full sequence is DDRGK domain-containing protein 1 (307 aa).

The Lumenal segment spans residues 1-2 (MD). A helical transmembrane segment spans residues 3–23 (LILLVGIATALLLILITLYFL). At 24-307 (QSKNAKTETK…TPVAAGESSA (284 aa)) the chain is on the cytoplasmic side. The segment at 31–175 (ETKAAAQPQR…EADRLAKEER (145 aa)) is disordered. Low complexity predominate over residues 52–83 (RRAQIARNQRNRLRQNQNAPAVAAAAAPAAAV). Positions 107–175 (LDEKMGAKKR…EADRLAKEER (69 aa)) are enriched in basic and acidic residues.

It belongs to the DDRGK1 family. In terms of assembly, interacts with Atg9; the interaction is transient.

It is found in the endoplasmic reticulum membrane. In terms of biological role, substrate adapter for ufmylation, the covalent attachment of the ubiquitin-like modifier UFM1 to substrate proteins. Required for ufmylation of Atg9; protects the nervous system during aging, possibly by stabilizing Atg9 and supporting its function. The sequence is that of DDRGK domain-containing protein 1 from Drosophila virilis (Fruit fly).